A 117-amino-acid polypeptide reads, in one-letter code: ATP-dependent Clp protease adapter protein ClpS 1 (117 aa).

It belongs to the ClpS family. As to quaternary structure, binds to the N-terminal domain of the chaperone ClpA.

Functionally, involved in the modulation of the specificity of the ClpAP-mediated ATP-dependent protein degradation. The protein is ATP-dependent Clp protease adapter protein ClpS 1 of Agrobacterium fabrum (strain C58 / ATCC 33970) (Agrobacterium tumefaciens (strain C58)).